Reading from the N-terminus, the 169-residue chain is Probable phospholipid hydroperoxide glutathione peroxidase (169 aa).

C43 is an active-site residue.

It belongs to the glutathione peroxidase family. As to expression, germinating seed, apex, flower, as well as in stressed tissues.

The protein localises to the cytoplasm. The catalysed reaction is a hydroperoxy polyunsaturated fatty acid + 2 glutathione = a hydroxy polyunsaturated fatty acid + glutathione disulfide + H2O. Functionally, protects cells and enzymes from oxidative damage, by catalyzing the reduction of hydrogen peroxide, lipid peroxides and organic hydroperoxide, by glutathione. The protein is Probable phospholipid hydroperoxide glutathione peroxidase of Nicotiana sylvestris (Wood tobacco).